A 323-amino-acid chain; its full sequence is Protoheme IX farnesyltransferase (323 aa).

8 helical membrane-spanning segments follow: residues 50–70 (IVLI…ANTF), 97–117 (NRDA…WLWL), 118–138 (LCDS…YIFV), 150–170 (NIVW…AVIV), 184–204 (AIVL…ALAM), 231–248 (IVWY…LIPA), 252–274 (IYAA…LHLG), and 293–313 (YLAV…ETIG).

The protein belongs to the UbiA prenyltransferase family. Protoheme IX farnesyltransferase subfamily.

The protein localises to the cell membrane. The enzyme catalyses heme b + (2E,6E)-farnesyl diphosphate + H2O = Fe(II)-heme o + diphosphate. The protein operates within porphyrin-containing compound metabolism; heme O biosynthesis; heme O from protoheme: step 1/1. Converts heme B (protoheme IX) to heme O by substitution of the vinyl group on carbon 2 of heme B porphyrin ring with a hydroxyethyl farnesyl side group. The chain is Protoheme IX farnesyltransferase from Corynebacterium glutamicum (strain R).